Consider the following 203-residue polypeptide: Peroxiredoxin (203 aa).

The region spanning 3–156 (VVLGQKAPDF…IIRVIKALQF (154 aa)) is the Thioredoxin domain. The Cysteine sulfenic acid (-SOH) intermediate role is filled by C44. R119 serves as a coordination point for substrate.

The protein belongs to the peroxiredoxin family. Prx6 subfamily. As to quaternary structure, homodecamer. Pentamer of dimers that assemble into a ring structure.

The protein resides in the cytoplasm. The catalysed reaction is a hydroperoxide + [thioredoxin]-dithiol = an alcohol + [thioredoxin]-disulfide + H2O. Thiol-specific peroxidase that catalyzes the reduction of hydrogen peroxide and organic hydroperoxides to water and alcohols, respectively. Plays a role in cell protection against oxidative stress by detoxifying peroxides. This chain is Peroxiredoxin, found in Thermoplasma volcanium (strain ATCC 51530 / DSM 4299 / JCM 9571 / NBRC 15438 / GSS1).